A 172-amino-acid polypeptide reads, in one-letter code: Lytic chitin monooxygenase (172 aa).

The first 30 residues, 1–30, serve as a signal peptide directing secretion; the sequence is MHAGRKTAVLIGAALAPVIAVSLPAASASA. Residues H31 and H106 each coordinate Cu cation. Residues 31 to 168 enclose the Chitin-binding type-4 domain; it reads HGYISNPPSR…DNAFYACIDV (138 aa).

Cu(2+) serves as cofactor.

It localises to the secreted. It carries out the reaction [(1-&gt;4)-N-acetyl-beta-D-glucosaminyl]n+m + reduced acceptor + O2 = [(1-&gt;4)-N-acetyl-beta-D-glucosaminyl]m-1-(1-&gt;4)-2-(acetylamino)-2-deoxy-D-glucono-1,5-lactone + [(1-&gt;4)-N-acetyl-beta-D-glucosaminyl]n + acceptor + H2O.. The protein operates within glycan degradation; chitin degradation. Functionally, involved in chitin degradation. Catalyzes the oxidative cleavage of glycosidic bonds in chitin via a copper-dependent mechanism, leading to oxidized chitooligomers with degrees of polymerization of 4-6. Is not active on cellulose. The chain is Lytic chitin monooxygenase from Streptomyces ambofaciens (strain ATCC 23877 / 3486 / DSM 40053 / JCM 4204 / NBRC 12836 / NRRL B-2516).